Here is a 595-residue protein sequence, read N- to C-terminus: Leiomodin-1 (595 aa).

3 disordered regions span residues M1–L69, Q81–N322, and D467–N568. A Phosphoserine modification is found at S12. A compositionally biased stretch (acidic residues) spans E27–D40. Composition is skewed to basic and acidic residues over residues Q81–R110, Q117–K127, F134–G192, S200–A223, G230–D249, R257–E287, D467–E476, and S484–V493. The residue at position 85 (S85) is a Phosphoserine. S135 carries the phosphoserine modification. 8 tandem repeats follow at residues A165–E179, R180–K195, N196–K211, E212–R226, N227–S240, K242–G255, G256–N271, and Q272–K288. An 8 X approximate tandem repeats region spans residues A165–K288. Residues S503 to K522 form a 5 X 4 AA approximate tandem repeats region. 2 stretches are compositionally biased toward pro residues: residues K505 to K517 and A527 to P538. S550 is subject to Phosphoserine. The WH2 domain occupies S569 to V588.

This sequence belongs to the tropomodulin family. Detected in aorta, urinary bladder and uterus (at protein level). Detected in smooth muscle cells. Detected in aorta, bladder, colon, intestine, stomach and uterus.

The protein resides in the cytoplasm. Its subcellular location is the myofibril. The protein localises to the sarcomere. It is found in the cytoskeleton. Required for proper contractility of visceral smooth muscle cells. Mediates nucleation of actin filaments. This is Leiomodin-1 (Lmod1) from Mus musculus (Mouse).